We begin with the raw amino-acid sequence, 457 residues long: UDP-glycosyltransferase 72C1 (457 aa).

UDP-alpha-D-glucose contacts are provided by residues Ser272, 343-344 (WA), 361-369 (HCGWNSVLE), and 383-386 (YSEQ).

It belongs to the UDP-glycosyltransferase family.

The sequence is that of UDP-glycosyltransferase 72C1 (UGT72C1) from Arabidopsis thaliana (Mouse-ear cress).